The following is a 158-amino-acid chain: Large ribosomal subunit protein uL23 (158 aa).

The segment at 1-43 is disordered; that stretch reads MPPKSSTKAEPKASSAKTQVAKAKSAKKAVVKGTSSKTQRRIR. Low complexity predominate over residues 12 to 23; sequence KASSAKTQVAKA.

Belongs to the universal ribosomal protein uL23 family.

In terms of biological role, this protein binds to a specific region on the 26S rRNA. This Puccinia graminis (Black stem rust fungus) protein is Large ribosomal subunit protein uL23.